Consider the following 302-residue polypeptide: Stanniocalcin-2 (302 aa).

The first 24 residues, methionine 1 to glycine 24, serve as a signal peptide directing secretion. Residues arginine 23–arginine 44 are disordered. N-linked (GlcNAc...) asparagine glycosylation is found at asparagine 73 and asparagine 74. The interval arginine 217–arginine 302 is disordered. Positions proline 227–serine 264 are enriched in basic and acidic residues. 2 positions are modified to phosphoserine: serine 250 and serine 251. A Phosphothreonine modification is found at threonine 254.

Belongs to the stanniocalcin family. In terms of assembly, homodimer; disulfide-linked.

Its subcellular location is the secreted. Functionally, has an anti-hypocalcemic action on calcium and phosphate homeostasis. This is Stanniocalcin-2 (STC2) from Pongo abelii (Sumatran orangutan).